A 204-amino-acid polypeptide reads, in one-letter code: Altered inheritance of mitochondria protein 20 (204 aa).

A helical membrane pass occupies residues 6–26 (VAVGTAVGIPIAVGVIIALIF).

This sequence belongs to the SKG1 family.

The protein resides in the vacuole membrane. Its function is as follows. Involved in cell cycle progression and surviving DNA damage. The chain is Altered inheritance of mitochondria protein 20 (AIM20) from Saccharomyces cerevisiae (strain JAY291) (Baker's yeast).